Consider the following 129-residue polypeptide: Glycine cleavage system H protein (129 aa).

The 83-residue stretch at 24–106 folds into the Lipoyl-binding domain; the sequence is AVRIGLSAYA…HGEGWLLVIQ (83 aa). N6-lipoyllysine is present on K65.

It belongs to the GcvH family. The glycine cleavage system is composed of four proteins: P, T, L and H. (R)-lipoate is required as a cofactor.

The glycine cleavage system catalyzes the degradation of glycine. The H protein shuttles the methylamine group of glycine from the P protein to the T protein. In Synechococcus sp. (strain WH7803), this protein is Glycine cleavage system H protein.